A 531-amino-acid chain; its full sequence is Sop-2-related protein 3 (531 aa).

In terms of tissue distribution, expressed ubiquitously.

The protein localises to the cytoplasm. It is found in the nucleus. Its function is as follows. Probably acts synergistically with sop-2 to maintain the transcriptionally repressive state of homeotic genes in order to regulate various neurogenic identities. Specification of some neuronal identities also involves expression of non-Hox genes. Specifies dopaminergic and serotonergic neuronal cell fate, and regulates neurotransmitter choice and axon pathfinding. This Caenorhabditis elegans protein is Sop-2-related protein 3 (sor-3).